The sequence spans 96 residues: MGIVFTNHNIDLLSVEFDEITKNCNYTFSVDGETAIFTARISIIRNIKGIKYSEELDKFIMSIMPLQPKVSKILGGVTWDCICGKEVGFPVRLIGK.

The chain is Cysteine protease immunity 1 from Escherichia coli O1:K1:H7 (strain ATCC 11775 / DSM 30083 / JCM 1649 / NBRC 102203 / NCTC 9001 / U5/41).